A 1932-amino-acid polypeptide reads, in one-letter code: DOCK-like protein 1 (1932 aa).

One can recognise a DOCKER domain in the interval 1410–1824; the sequence is LLEANRPELF…EIERYSRTLS (415 aa). Over residues 1908-1921 the composition is skewed to polar residues; sequence STFLAGSQPNTNTD. Positions 1908–1932 are disordered; sequence STFLAGSQPNTNTDSQHKHDYSHSG. Basic and acidic residues predominate over residues 1922-1932; sequence SQHKHDYSHSG.

Belongs to the DOCK family. Forms an active heterodimer with LMO1.

It localises to the cytoplasm. Its subcellular location is the mitochondrion. Its function is as follows. Forms a transiant heterodimeric complex with LMO1, that acts as a guanine nucleotide exchange factor exchange factor (GEF) for the small GTPase RHO5. DCK1, LMO1 and RHO5 relocate to mitochondria upon oxidative stress and trigger cell death. The DCK1/LMO1/RHO5 signaling module mediates mitochondrial turnover under nitrogen starvation conditions via mitophagy. The DCK1/LMO1/RHO5 signaling module plays also a function in cell wall integrity signaling. The chain is DOCK-like protein 1 from Saccharomyces cerevisiae (strain ATCC 204508 / S288c) (Baker's yeast).